The primary structure comprises 166 residues: Small ribosomal subunit protein uS5 (166 aa).

The S5 DRBM domain occupies 11-74 (LQEKLIAVNR…EKARRNMMNV (64 aa)).

Belongs to the universal ribosomal protein uS5 family. As to quaternary structure, part of the 30S ribosomal subunit. Contacts proteins S4 and S8.

Functionally, with S4 and S12 plays an important role in translational accuracy. In terms of biological role, located at the back of the 30S subunit body where it stabilizes the conformation of the head with respect to the body. This Sodalis glossinidius (strain morsitans) protein is Small ribosomal subunit protein uS5.